A 68-amino-acid chain; its full sequence is 1-carboxybiuret hydrolase subunit AtzG (68 aa).

Heterotetramer consisting of 2 AtzE and 2 AtzG subunits.

It functions in the pathway xenobiotic degradation; atrazine degradation. In terms of biological role, important for the activity of the AtzE subunit of 1-carboxybiuret hydrolase. This is 1-carboxybiuret hydrolase subunit AtzG from Pseudomonas sp. (strain ADP).